A 523-amino-acid polypeptide reads, in one-letter code: Transmembrane protein 266 (523 aa).

At 1-94 (MTNPQPAIEG…VFLLSASLNS (94 aa)) the chain is on the cytoplasmic side. The helical transmembrane segment at 95-115 (FLVACVILVVILLTLELLIDI) threads the bilayer. Topologically, residues 116 to 121 (KLLQFS) are extracellular. A helical membrane pass occupies residues 122–142 (SAFQFAGVIHWISLVILSVFF). Residues 143-161 (SETVLRIVVLGIWDYIENK) are Cytoplasmic-facing. A helical transmembrane segment spans residues 162-182 (IEVFDGAVIILSLAPMVASTV). The Extracellular segment spans residues 183-191 (ANGPRSPWD). A helical transmembrane segment spans residues 192 to 212 (AISLIIMLRIWRVKRVIDAYV). The Cytoplasmic portion of the chain corresponds to 213 to 523 (LPVKLEMEMV…EQKLHRVPEA (311 aa)). Positions 218–270 (EMEMVIQQYEKAKVIQDEQLERLTQICQEQGFEIRQLRAHLAQQDLDLAAERE) form a coiled coil. The interval 380–477 (SASRSSVTRA…PELEHRVSLF (98 aa)) is disordered. Residues 382–397 (SRSSVTRAQSDSSQTL) are compositionally biased toward low complexity. The segment covering 398–411 (GSSMDCSTAREEPS) has biased composition (polar residues). Pro residues predominate over residues 421 to 430 (LPSQQQVEEA).

Homodimer; disulfide-linked. In terms of tissue distribution, mainly expressed in the cerebellum. Also expressed in cerebral cortex, skeletal muscle and thyroid, but at much lower levels.

It is found in the cell membrane. Its subcellular location is the cell projection. The protein localises to the dendrite. It localises to the perikaryon. Its function is as follows. Voltage-sensor protein present on the post-synaptic side of glutamatergic mossy fibers and granule cells in the cerebellum. Despite the presence of a voltage-sensor segment, does not form a functional ion channel and its precise role remains unclear. Undergoes both rapid and slow structural rearrangements in response to changes in voltage. Contains a zinc-binding site that can regulate the slow conformational transition. The polypeptide is Transmembrane protein 266 (Homo sapiens (Human)).